The primary structure comprises 84 residues: Large ribosomal subunit protein bL31B (84 aa).

The protein belongs to the bacterial ribosomal protein bL31 family. Type B subfamily. As to quaternary structure, part of the 50S ribosomal subunit.

The sequence is that of Large ribosomal subunit protein bL31B from Photorhabdus laumondii subsp. laumondii (strain DSM 15139 / CIP 105565 / TT01) (Photorhabdus luminescens subsp. laumondii).